Consider the following 88-residue polypeptide: Small ribosomal subunit protein bS16c (88 aa).

The protein belongs to the bacterial ribosomal protein bS16 family.

Its subcellular location is the plastid. The protein resides in the chloroplast. The polypeptide is Small ribosomal subunit protein bS16c (Solanum bulbocastanum (Wild potato)).